A 517-amino-acid polypeptide reads, in one-letter code: Bifunctional purine biosynthesis protein PurH (517 aa).

The 145-residue stretch at 1 to 145 folds into the MGS-like domain; sequence MSPLALVSVS…KNHADVAVLV (145 aa).

This sequence belongs to the PurH family.

The catalysed reaction is (6R)-10-formyltetrahydrofolate + 5-amino-1-(5-phospho-beta-D-ribosyl)imidazole-4-carboxamide = 5-formamido-1-(5-phospho-D-ribosyl)imidazole-4-carboxamide + (6S)-5,6,7,8-tetrahydrofolate. The enzyme catalyses IMP + H2O = 5-formamido-1-(5-phospho-D-ribosyl)imidazole-4-carboxamide. It participates in purine metabolism; IMP biosynthesis via de novo pathway; 5-formamido-1-(5-phospho-D-ribosyl)imidazole-4-carboxamide from 5-amino-1-(5-phospho-D-ribosyl)imidazole-4-carboxamide (10-formyl THF route): step 1/1. Its pathway is purine metabolism; IMP biosynthesis via de novo pathway; IMP from 5-formamido-1-(5-phospho-D-ribosyl)imidazole-4-carboxamide: step 1/1. The chain is Bifunctional purine biosynthesis protein PurH from Prochlorococcus marinus (strain MIT 9515).